A 193-amino-acid chain; its full sequence is Cerebellin-1 (193 aa).

The first 21 residues, 1–21, serve as a signal peptide directing secretion; the sequence is MLGVVELLLLGAAWLAGPARG. The N-linked (GlcNAc...) asparagine glycan is linked to N23. Residues 34–38 are essential for interaction with NRXN1 and linker of two C1q trimers into disulfide-linked hexamers; the sequence is CLVVC. A C1q domain is found at 57 to 193; that stretch reads SGSAKVAFSA…TFSGFLVFPL (137 aa). Residues 62–193 are necessary for interaction with CBLN3, and homotrimerization; the sequence is VAFSAIRSTN…TFSGFLVFPL (132 aa). N-linked (GlcNAc...) asparagine glycosylation is present at N79. Residues 122-147 form an essential for interaction with GRID2 region; the sequence is YNRQTIQVSLMLNGWPVISAFAGDQD.

In terms of assembly, homohexamer; disulfide-linked homotrimers. The trimers are assembled via the globular C1q domains. The trimers associate via N-terminal cysteine residues to form disulfide-linked hexamers. May form oligomers with CBLN2, CBLN3 and CBLN4 prior to secretion. Once secreted, does not interact with other CBLN family members. Interacts with GRID1. Interacts with NRXN1 and NRXN2 long (alpha) and short (beta) isoforms produced by alternative promoter usage. Competes with NLGN1 for NRXN1-binding. Weakly interacts with NRXN3 short isoform and not at all with NRXN3 long isoform. Interacts (via C1q domain) with GRID2; GRID2-binding is calcium-independent; CBLN1 hexamers anchor GRID2 N-terminal domain dimers to monomeric NRXN1 isoform beta; promotes synaptogenesis and mediates the D-Serine-dependent long term depression signals and AMPA receptor endocytosis. The proteolytic processing to yield cerebellin seems to occur either prior to the secretion by presynaptic neurons and subsequent oligomerization or in some other location after release of the mature protein. Post-translationally, sialoglycoprotein.

It is found in the secreted. The protein localises to the postsynaptic cell membrane. Functionally, required for synapse integrity and synaptic plasticity. During cerebellar synapse formation, essential for the matching and maintenance of pre- and post-synaptic elements at parallel fiber-Purkinje cell synapses, the establishment of the proper pattern of climbing fiber-Purkinje cell innervation, and induction of long-term depression at parallel fiber-Purkinje cell synapses. Plays a role as a synaptic organizer that acts bidirectionally on both pre- and post-synaptic components. On the one hand induces accumulation of synaptic vesicles in the pre-synaptic part by binding with NRXN1 and in other hand induces clustering of GRID2 and its associated proteins at the post-synaptic site through association of GRID2. NRXN1-CBLN1-GRID2 complex directly induces parallel fiber protrusions that encapsulate spines of Purkinje cells leading to accumulation of GRID2 and synaptic vesicles. Required for CBLN3 export from the endoplasmic reticulum and secretion. NRXN1-CBLN1-GRID2 complex mediates the D-Serine-dependent long term depression signals and AMPA receptor endocytosis. Essential for long-term maintenance but not establishment of excitatory synapses. Inhibits the formation and function of inhibitory GABAergic synapses in cerebellar Purkinje cells. Its function is as follows. The cerebellin peptide exerts neuromodulatory functions. Directly stimulates norepinephrine release via the adenylate cyclase/PKA-dependent signaling pathway; and indirectly enhances adrenocortical secretion in vivo, through a paracrine mechanism involving medullary catecholamine release. The chain is Cerebellin-1 from Bos taurus (Bovine).